The following is a 259-amino-acid chain: Dickkopf-related protein 2 (259 aa).

The first 33 residues, 1 to 33, serve as a signal peptide directing secretion; the sequence is MAALMRSKDSSCCLLLLAAVLMVESSQIGSSRA. N-linked (GlcNAc...) asparagine glycosylation occurs at Asn-52. Positions 78 to 127 are DKK-type Cys-1; it reads CSSDKECEVGRYCHSPHQGSSACMVCRRKKKRCHRDGMCCPSTRCNNGIC. Intrachain disulfides connect Cys-183-Cys-195, Cys-189-Cys-204, Cys-194-Cys-231, Cys-214-Cys-239, and Cys-233-Cys-256. Residues 183–256 form a DKK-type Cys-2 region; sequence CLRSSDCIEG…YSSKARLHVC (74 aa).

The protein belongs to the dickkopf family. Interacts with LRP5 and LRP6. May be proteolytically processed by a furin-like protease. As to expression, expressed in heart, brain, skeletal muscle and lung.

The protein resides in the secreted. In terms of biological role, antagonizes canonical Wnt signaling by inhibiting LRP5/6 interaction with Wnt and by forming a ternary complex with the transmembrane protein KREMEN that promotes internalization of LRP5/6. DKKs play an important role in vertebrate development, where they locally inhibit Wnt regulated processes such as antero-posterior axial patterning, limb development, somitogenesis and eye formation. In the adult, Dkks are implicated in bone formation and bone disease, cancer and Alzheimer disease. The protein is Dickkopf-related protein 2 (DKK2) of Homo sapiens (Human).